A 245-amino-acid chain; its full sequence is UPF0246 protein cgR_1824 (245 aa).

The protein belongs to the UPF0246 family.

This is UPF0246 protein cgR_1824 from Corynebacterium glutamicum (strain R).